The chain runs to 462 residues: UDP-N-acetylmuramate--L-alanine ligase (462 aa).

Position 112–118 (112–118 (GTHGKTT)) interacts with ATP.

This sequence belongs to the MurCDEF family.

It is found in the cytoplasm. It catalyses the reaction UDP-N-acetyl-alpha-D-muramate + L-alanine + ATP = UDP-N-acetyl-alpha-D-muramoyl-L-alanine + ADP + phosphate + H(+). Its pathway is cell wall biogenesis; peptidoglycan biosynthesis. Functionally, cell wall formation. The polypeptide is UDP-N-acetylmuramate--L-alanine ligase (Geobacter sulfurreducens (strain ATCC 51573 / DSM 12127 / PCA)).